The following is a 93-amino-acid chain: Cytochrome c (93 aa).

Positions 1-13 (AALPPGDAAAAQG) are enriched in low complexity. Residues 1–21 (AALPPGDAAAAQGGSNGVGPN) form a disordered region. A heme c-binding site is contributed by Met-70.

Belongs to the cytochrome c family. Post-translationally, binds 1 heme c group covalently per subunit.

The protein resides in the mitochondrion intermembrane space. Its function is as follows. Electron carrier protein. The oxidized form of the cytochrome c heme group can accept an electron from the heme group of the cytochrome c1 subunit of cytochrome reductase. Cytochrome c then transfers this electron to the cytochrome oxidase complex, the final protein carrier in the mitochondrial electron-transport chain. This chain is Cytochrome c, found in Trypanosoma brucei brucei.